A 440-amino-acid chain; its full sequence is Chromosome partition protein MukF (440 aa).

Residues 208–236 form a leucine-zipper region; the sequence is LSETSGTLRELQDTLEAAGDKLQANLLRI.

This sequence belongs to the MukF family. In terms of assembly, interacts, and probably forms a ternary complex, with MukE and MukB via its C-terminal region. The complex formation is stimulated by calcium or magnesium. It is required for an interaction between MukE and MukB.

It is found in the cytoplasm. It localises to the nucleoid. Involved in chromosome condensation, segregation and cell cycle progression. May participate in facilitating chromosome segregation by condensation DNA from both sides of a centrally located replisome during cell division. Not required for mini-F plasmid partitioning. Probably acts via its interaction with MukB and MukE. Overexpression results in anucleate cells. It has a calcium binding activity. This Shigella boydii serotype 4 (strain Sb227) protein is Chromosome partition protein MukF.